The following is a 266-amino-acid chain: Protein STAY-GREEN homolog, chloroplastic (266 aa).

The N-terminal 50 residues, 1-50 (MGTLTASLVAPSKLNPEKHSSLFVYKTRRKSHKNQSIVPVARLFGPAIFE), are a transit peptide targeting the chloroplast.

It belongs to the staygreen family.

It is found in the plastid. The protein resides in the chloroplast. Required to trigger chlorophyll degradation during leaf senescence and fruit ripening. This chain is Protein STAY-GREEN homolog, chloroplastic, found in Capsicum annuum (Capsicum pepper).